A 373-amino-acid polypeptide reads, in one-letter code: uncharacterized protein (373 aa).

This is an uncharacterized protein from Thermoproteus tenax.